A 128-amino-acid polypeptide reads, in one-letter code: Con-Ins F1 (128 aa).

The N-terminal stretch at 1–24 (MTTSSYFLLVTLGLLLYVCRSSFG) is a signal peptide. 4 cysteine pairs are disulfide-bonded: cysteine 29/cysteine 104, cysteine 41/cysteine 107, cysteine 53/cysteine 120, and cysteine 106/cysteine 111. Residues 59–89 (LQGGTGKKRGRASPLRKRRAFLSMLKARAKR) constitute a propeptide, c peptide. Glutamate 115 carries the post-translational modification 4-carboxyglutamate; partial. The residue at position 127 (serine 127) is a Serine amide.

The protein belongs to the insulin family. As to quaternary structure, heterodimer of A and B chains; disulfide-linked. Expressed by the venom gland.

The protein resides in the secreted. In terms of biological role, this venom insulin facilitates prey capture by rapidly inducing hypoglycemic shock. Intraperitoneal injection of this peptide into zebrafish lowers blood glucose with the same potency than human insulin. In vivo, when applied to water, this peptide reduces overall locomotor activity of zebrafish larvae, observed as a significant decrease in the percentage of time spent swimming and movement frequency. In Conus floridulus (Cone snail), this protein is Con-Ins F1.